The chain runs to 463 residues: Probable Xaa-Pro aminopeptidase PEPP (463 aa).

Mn(2+)-binding residues include D259, D270, E393, and E433.

This sequence belongs to the peptidase M24B family. It depends on Mn(2+) as a cofactor.

The enzyme catalyses Release of any N-terminal amino acid, including proline, that is linked to proline, even from a dipeptide or tripeptide.. In terms of biological role, catalyzes the removal of a penultimate prolyl residue from the N-termini of peptides. This is Probable Xaa-Pro aminopeptidase PEPP (PEPP) from Phaeosphaeria nodorum (strain SN15 / ATCC MYA-4574 / FGSC 10173) (Glume blotch fungus).